The primary structure comprises 84 residues: uncharacterized protein (84 aa).

Positions 62–84 are disordered; it reads GYATKKDTMRMSAQKRTTKRLKP.

This is an uncharacterized protein from Soybean chlorotic mottle virus.